The following is a 358-amino-acid chain: 3'(2'),5'-bisphosphate nucleotidase (358 aa).

The active-site Proton acceptor is Asp-52. Positions 78, 140, 142, and 143 each coordinate Mg(2+). Thr-145 acts as the Proton acceptor in catalysis. The adenosine 3',5'-bisphosphate site is built by Thr-145, His-239, Ser-263, Lys-266, Arg-280, and Asp-292. AMP contacts are provided by His-239, Ser-263, Lys-266, Arg-280, and Asp-292. Asp-292 contacts Mg(2+).

Belongs to the inositol monophosphatase superfamily. The cofactor is Mg(2+). Is constitutively transcribed in both roots and shoots.

It carries out the reaction 3'-phosphoadenylyl sulfate + H2O = adenosine 5'-phosphosulfate + phosphate. The enzyme catalyses adenosine 3',5'-bisphosphate + H2O = AMP + phosphate. The catalysed reaction is adenosine 2',5'-bisphosphate + H2O = AMP + phosphate. Its activity is regulated as follows. Inhibited by Ca(2+), Li(+), and Na(+) and activated by K(+). In terms of biological role, phosphatase that converts adenosine 3'-phosphate 5'-phosphosulfate (PAPS) to adenosine 5'-phosphosulfate (APS) and 3'(2')-phosphoadenosine 5'-phosphate (PAP) to AMP. May regulate the flux of sulfur in the sulfur-activation pathway by converting PAPS to APS. Shows no activity on myo-inositol 1-phosphate, beta-glycerol phosphate, NADPH, NADP and 5'-AMP. The sequence is that of 3'(2'),5'-bisphosphate nucleotidase from Oryza sativa (Rice).